Consider the following 178-residue polypeptide: uncharacterized protein (178 aa).

A disordered region spans residues 152 to 178 (KKLKGAEPKEHQAPNFEPPTEIFPESN).

This sequence belongs to the EUO family.

This is an uncharacterized protein from Chlamydia pneumoniae (Chlamydophila pneumoniae).